The following is a 285-amino-acid chain: 3-methyl-2-oxobutanoate hydroxymethyltransferase (285 aa).

A disordered region spans residues 1-22 (MSEHNVYGAAQPAQPGQPAQPR). The segment covering 8-21 (GAAQPAQPGQPAQP) has biased composition (low complexity). Residues aspartate 66 and aspartate 105 each contribute to the Mg(2+) site. 3-methyl-2-oxobutanoate contacts are provided by residues 66 to 67 (DS), aspartate 105, and lysine 135. Glutamate 137 is a binding site for Mg(2+). Residue glutamate 203 is the Proton acceptor of the active site.

It belongs to the PanB family. As to quaternary structure, homodecamer; pentamer of dimers. The cofactor is Mg(2+).

The protein resides in the cytoplasm. It catalyses the reaction 3-methyl-2-oxobutanoate + (6R)-5,10-methylene-5,6,7,8-tetrahydrofolate + H2O = 2-dehydropantoate + (6S)-5,6,7,8-tetrahydrofolate. It participates in cofactor biosynthesis; (R)-pantothenate biosynthesis; (R)-pantoate from 3-methyl-2-oxobutanoate: step 1/2. Catalyzes the reversible reaction in which hydroxymethyl group from 5,10-methylenetetrahydrofolate is transferred onto alpha-ketoisovalerate to form ketopantoate. In Mycolicibacterium paratuberculosis (strain ATCC BAA-968 / K-10) (Mycobacterium paratuberculosis), this protein is 3-methyl-2-oxobutanoate hydroxymethyltransferase.